The primary structure comprises 900 residues: Bifunctional uridylyltransferase/uridylyl-removing enzyme (900 aa).

The segment at 1–342 (MPQVDPELFD…PCEQPVQIQP (342 aa)) is uridylyltransferase. Positions 343–705 (LNSRFQLRDG…TTQREFESGS (363 aa)) are uridylyl-removing. The region spanning 461–583 (VDAHTLNLIK…VGDQTHLDYL (123 aa)) is the HD domain. ACT domains are found at residues 706–789 (QIFI…IIQR) and 816–891 (VLEV…DNGR).

Belongs to the GlnD family. The cofactor is Mg(2+).

The enzyme catalyses [protein-PII]-L-tyrosine + UTP = [protein-PII]-uridylyl-L-tyrosine + diphosphate. The catalysed reaction is [protein-PII]-uridylyl-L-tyrosine + H2O = [protein-PII]-L-tyrosine + UMP + H(+). Its activity is regulated as follows. Uridylyltransferase (UTase) activity is inhibited by glutamine, while glutamine activates uridylyl-removing (UR) activity. Its function is as follows. Modifies, by uridylylation and deuridylylation, the PII regulatory proteins (GlnB and homologs), in response to the nitrogen status of the cell that GlnD senses through the glutamine level. Under low glutamine levels, catalyzes the conversion of the PII proteins and UTP to PII-UMP and PPi, while under higher glutamine levels, GlnD hydrolyzes PII-UMP to PII and UMP (deuridylylation). Thus, controls uridylylation state and activity of the PII proteins, and plays an important role in the regulation of nitrogen assimilation and metabolism. This is Bifunctional uridylyltransferase/uridylyl-removing enzyme from Pseudomonas aeruginosa (strain LESB58).